Consider the following 279-residue polypeptide: MANLRAQILEELGAQPTIDAAGEIRTRVQFLKDYLLSTPAKGFVLGISGGQDSTLTGRLAQLAASELREEGHDAEFVAVRLPYGTQADESDAQISLDFIKPDRSVVVNVKPGADATAKESSEALRDIIGDGGELRDFVRGNIKARERMVIQYSIAGQLGYLVVGTDHAAEAITGFFTKFGDGGVDVTPLTGLSKRQGAALLRELGAPESTWKKVPTADLEDDRPALPDEEALGVTYAQIDDYLEGKDVPEDIARKLETMFLNTRHKRTVPVTPLDTWWR.

46–53 (GISGGQDS) serves as a coordination point for ATP. Asp52 contacts Mg(2+). Deamido-NAD(+) is bound at residue Arg145. An ATP-binding site is contributed by Thr165. A Mg(2+)-binding site is contributed by Glu170. Deamido-NAD(+) is bound by residues Lys178 and Asp185. Lys194 and Thr216 together coordinate ATP. 265–266 (HK) lines the deamido-NAD(+) pocket.

The protein belongs to the NAD synthetase family. In terms of assembly, homodimer.

It catalyses the reaction deamido-NAD(+) + NH4(+) + ATP = AMP + diphosphate + NAD(+) + H(+). It participates in cofactor biosynthesis; NAD(+) biosynthesis; NAD(+) from deamido-NAD(+) (ammonia route): step 1/1. In terms of biological role, catalyzes the ATP-dependent amidation of deamido-NAD to form NAD. Uses ammonia as a nitrogen source. The sequence is that of NH(3)-dependent NAD(+) synthetase from Rhodococcus opacus (strain B4).